A 551-amino-acid chain; its full sequence is Solute carrier family 22 member 3 (551 aa).

The helical transmembrane segment at 21–41 threads the bilayer; it reads VFLLLCLTGVTFAFLFVGVVF. 3 N-linked (GlcNAc...) asparagine glycosylation sites follow: Asn72, Asn99, and Asn114. A helical membrane pass occupies residues 177 to 197; the sequence is LIVYLISCFGVGITGVVVAFA. N-linked (GlcNAc...) asparagine glycosylation is present at Asn199. 2 helical membrane-spanning segments follow: residues 236-256 and 264-284; these read IVGI…PGIA and GIQL…WVVP. The Proline-rich sequence motif lies at 284–288; that stretch reads PESPR. N-linked (GlcNAc...) asparagine glycosylation occurs at Asn317. Helical transmembrane passes span 376 to 396, 463 to 483, and 493 to 513; these read MDFF…LLTI, FGVS…PFLL, and LPLI…MLLP.

This sequence belongs to the major facilitator (TC 2.A.1) superfamily. Organic cation transporter (TC 2.A.1.19) family. Highly expressed in placenta. Expressed in intestine, hear, kidney and lung. Widely expressed in brain, particularly in hippocampus, cerebellum, cerebral cortex. In the brain, expressed predominantly in regions located at the brain-cerebrospinal fluid border, with expression extending to regions that belong to monoaminergic pathways such as raphe nuclei, striatum and thalamus. In brain, expressed in neurons and glial cells of amygdala. Expression is low in kidney and lung and undetectable in liver. Expressed in Sertoli cells in testis. Expressed in tracheal and bronchial epithelium of the respiratory tract, where it localizes to the apical membrane of ciliated and brush cells, and in basal cells.

It is found in the cell membrane. Its subcellular location is the apical cell membrane. It localises to the basolateral cell membrane. The protein localises to the mitochondrion membrane. The protein resides in the endomembrane system. It is found in the nucleus membrane. Its subcellular location is the nucleus outer membrane. It catalyses the reaction (R)-noradrenaline(out) = (R)-noradrenaline(in). The catalysed reaction is (R)-adrenaline(out) = (R)-adrenaline(in). It carries out the reaction serotonin(out) = serotonin(in). The enzyme catalyses dopamine(out) = dopamine(in). It catalyses the reaction histamine(out) = histamine(in). The catalysed reaction is tyramine(in) = tyramine(out). It carries out the reaction guanidine(out) = guanidine(in). The enzyme catalyses agmatine(out) = agmatine(in). It catalyses the reaction spermidine(in) = spermidine(out). The catalysed reaction is L-histidyl-L-proline diketopiperazine(in) = L-histidyl-L-proline diketopiperazine(out). It carries out the reaction (R)-salsolinol(in) = (R)-salsolinol(out). In terms of biological role, electrogenic voltage-dependent transporter that mediates the transport of a variety of organic cations such as endogenous bioactive amines, cationic drugs and xenobiotics. Cation cellular uptake or release is driven by the electrochemical potential, i.e. membrane potential and concentration gradient. Functions as a Na(+)- and Cl(-)-independent, bidirectional uniporter. Implicated in neuronal monoamine neurotransmitters cellular uptake such as dopamine, adrenaline/epinephrine, noradrenaline/norepinephrine, histamine, serotonin and tyramine, thereby supporting a role in homeostatic regulation of aminergic neurotransmission in the brain. Transports dopaminergic neuromodulators cyclo(his-pro) and salsolinol with low efficiency. May be involved in the uptake and disposition of cationic compounds by renal clearance from the blood flow. May contribute to regulate the transport of cationic compounds in testis across the blood-testis-barrier. Mediates the transport of polyamine spermidine and putrescine. Mediates the bidirectional transport of polyamine agmatine. Also transports guanidine. May also mediate intracellular transport of organic cations, thereby playing a role in amine metabolism and intracellular signaling. This chain is Solute carrier family 22 member 3, found in Rattus norvegicus (Rat).